We begin with the raw amino-acid sequence, 390 residues long: tRNA(Met) cytidine acetate ligase (390 aa).

ATP-binding positions include 7 to 20, glycine 101, asparagine 162, and arginine 187; that span reads VVEYNPFHNGHKLH.

It belongs to the TmcAL family.

It is found in the cytoplasm. The catalysed reaction is cytidine(34) in elongator tRNA(Met) + acetate + ATP = N(4)-acetylcytidine(34) in elongator tRNA(Met) + AMP + diphosphate. Catalyzes the formation of N(4)-acetylcytidine (ac(4)C) at the wobble position of elongator tRNA(Met), using acetate and ATP as substrates. First activates an acetate ion to form acetyladenylate (Ac-AMP) and then transfers the acetyl group to tRNA to form ac(4)C34. In Listeria monocytogenes serotype 4b (strain F2365), this protein is tRNA(Met) cytidine acetate ligase.